The sequence spans 227 residues: ATP-dependent dethiobiotin synthetase BioD (227 aa).

Residue 13-18 (DIGKTY) participates in ATP binding. T17 is a Mg(2+) binding site. The active site involves K38. Residue S42 coordinates substrate. Residues D55, 116-119 (EGSG), and 179-180 (NN) contribute to the ATP site. D55 and E116 together coordinate Mg(2+).

This sequence belongs to the dethiobiotin synthetase family. Homodimer. Mg(2+) is required as a cofactor.

It localises to the cytoplasm. The catalysed reaction is (7R,8S)-7,8-diammoniononanoate + CO2 + ATP = (4R,5S)-dethiobiotin + ADP + phosphate + 3 H(+). Its pathway is cofactor biosynthesis; biotin biosynthesis; biotin from 7,8-diaminononanoate: step 1/2. Functionally, catalyzes a mechanistically unusual reaction, the ATP-dependent insertion of CO2 between the N7 and N8 nitrogen atoms of 7,8-diaminopelargonic acid (DAPA, also called 7,8-diammoniononanoate) to form a ureido ring. This Clostridium botulinum (strain Kyoto / Type A2) protein is ATP-dependent dethiobiotin synthetase BioD.